Here is a 405-residue protein sequence, read N- to C-terminus: Multifunctional CCA protein (405 aa).

Residues glycine 8 and arginine 11 each coordinate ATP. CTP contacts are provided by glycine 8 and arginine 11. Residues aspartate 21 and aspartate 23 each coordinate Mg(2+). Residues arginine 91, arginine 137, and arginine 140 each coordinate ATP. 3 residues coordinate CTP: arginine 91, arginine 137, and arginine 140. Positions 225 to 326 constitute an HD domain; it reads TGVHAMLVLD…LRLLRECDAL (102 aa).

The protein belongs to the tRNA nucleotidyltransferase/poly(A) polymerase family. Bacterial CCA-adding enzyme type 1 subfamily. In terms of assembly, monomer. Can also form homodimers and oligomers. It depends on Mg(2+) as a cofactor. Ni(2+) serves as cofactor.

The catalysed reaction is a tRNA precursor + 2 CTP + ATP = a tRNA with a 3' CCA end + 3 diphosphate. It carries out the reaction a tRNA with a 3' CCA end + 2 CTP + ATP = a tRNA with a 3' CCACCA end + 3 diphosphate. Catalyzes the addition and repair of the essential 3'-terminal CCA sequence in tRNAs without using a nucleic acid template. Adds these three nucleotides in the order of C, C, and A to the tRNA nucleotide-73, using CTP and ATP as substrates and producing inorganic pyrophosphate. tRNA 3'-terminal CCA addition is required both for tRNA processing and repair. Also involved in tRNA surveillance by mediating tandem CCA addition to generate a CCACCA at the 3' terminus of unstable tRNAs. While stable tRNAs receive only 3'-terminal CCA, unstable tRNAs are marked with CCACCA and rapidly degraded. The polypeptide is Multifunctional CCA protein (Laribacter hongkongensis (strain HLHK9)).